Reading from the N-terminus, the 190-residue chain is MAKGLEKFNELVESFANLPTIGKKTAIRLAYHLCINNQIDGMKLAHNIENAIRFIKPCEQCGALSENELCEICSDEERSKNILCIVESPKDILTLEESQSYNGLYFVLDELNEEKLEKLKQILLKLNISELIFALTHSINSDATIFFIEDKFKDLNLTFSKIAQGIPSGVNLENVDLISLNKAMNFRTKI.

Residues 58–73 (CEQCGALSENELCEIC) form a C4-type zinc finger. A Toprim domain is found at 81-167 (NILCIVESPK…TFSKIAQGIP (87 aa)).

This sequence belongs to the RecR family.

Functionally, may play a role in DNA repair. It seems to be involved in an RecBC-independent recombinational process of DNA repair. It may act with RecF and RecO. The polypeptide is Recombination protein RecR (Campylobacter jejuni subsp. doylei (strain ATCC BAA-1458 / RM4099 / 269.97)).